A 411-amino-acid chain; its full sequence is Tyrosine--tRNA ligase (411 aa).

Tyr34 is an L-tyrosine binding site. The 'HIGH' region motif lies at 39-48 (CTATSLHIGS). Residues Tyr171 and Gln175 each contribute to the L-tyrosine site. Residues 231 to 235 (KMGKT) carry the 'KMSKS' region motif. ATP is bound at residue Lys234. The S4 RNA-binding domain occupies 345 to 411 (ISAYNLFYNA…GKKRHILVKV (67 aa)).

The protein belongs to the class-I aminoacyl-tRNA synthetase family. TyrS type 1 subfamily. In terms of assembly, homodimer.

Its subcellular location is the cytoplasm. The enzyme catalyses tRNA(Tyr) + L-tyrosine + ATP = L-tyrosyl-tRNA(Tyr) + AMP + diphosphate + H(+). In terms of biological role, catalyzes the attachment of tyrosine to tRNA(Tyr) in a two-step reaction: tyrosine is first activated by ATP to form Tyr-AMP and then transferred to the acceptor end of tRNA(Tyr). The polypeptide is Tyrosine--tRNA ligase (Rickettsia prowazekii (strain Madrid E)).